We begin with the raw amino-acid sequence, 130 residues long: S-adenosylmethionine decarboxylase proenzyme (130 aa).

Ser78 (schiff-base intermediate with substrate; via pyruvic acid) is an active-site residue. Residue Ser78 is modified to Pyruvic acid (Ser); by autocatalysis. The Proton acceptor; for processing activity role is filled by His83. Catalysis depends on Cys98, which acts as the Proton donor; for catalytic activity.

It belongs to the prokaryotic AdoMetDC family. Type 1 subfamily. In terms of assembly, heterotetramer of two alpha and two beta chains arranged as a dimer of alpha/beta heterodimers. It depends on pyruvate as a cofactor. Post-translationally, is synthesized initially as an inactive proenzyme. Formation of the active enzyme involves a self-maturation process in which the active site pyruvoyl group is generated from an internal serine residue via an autocatalytic post-translational modification. Two non-identical subunits are generated from the proenzyme in this reaction, and the pyruvate is formed at the N-terminus of the alpha chain, which is derived from the carboxyl end of the proenzyme. The post-translation cleavage follows an unusual pathway, termed non-hydrolytic serinolysis, in which the side chain hydroxyl group of the serine supplies its oxygen atom to form the C-terminus of the beta chain, while the remainder of the serine residue undergoes an oxidative deamination to produce ammonia and the pyruvoyl group blocking the N-terminus of the alpha chain.

It catalyses the reaction S-adenosyl-L-methionine + H(+) = S-adenosyl 3-(methylsulfanyl)propylamine + CO2. The protein operates within amine and polyamine biosynthesis; S-adenosylmethioninamine biosynthesis; S-adenosylmethioninamine from S-adenosyl-L-methionine: step 1/1. Functionally, catalyzes the decarboxylation of S-adenosylmethionine to S-adenosylmethioninamine (dcAdoMet), the propylamine donor required for the synthesis of the polyamines spermine and spermidine from the diamine putrescine. The chain is S-adenosylmethionine decarboxylase proenzyme from Aeropyrum pernix (strain ATCC 700893 / DSM 11879 / JCM 9820 / NBRC 100138 / K1).